The sequence spans 314 residues: Lipoyl synthase (314 aa).

The segment at 1-24 (MMDTPIIRHPEKVRRPDNPSPRKP) is disordered. [4Fe-4S] cluster-binding residues include cysteine 53, cysteine 58, cysteine 64, cysteine 79, cysteine 83, cysteine 86, and serine 293. The Radical SAM core domain occupies 65–282 (WKRRHATFMI…ADIARGKGFL (218 aa)). Residues 294-308 (HHADRDFEDLRKARQ) are compositionally biased toward basic and acidic residues. Residues 294-314 (HHADRDFEDLRKARQDAAATK) form a disordered region.

This sequence belongs to the radical SAM superfamily. Lipoyl synthase family. The cofactor is [4Fe-4S] cluster.

The protein resides in the cytoplasm. It catalyses the reaction [[Fe-S] cluster scaffold protein carrying a second [4Fe-4S](2+) cluster] + N(6)-octanoyl-L-lysyl-[protein] + 2 oxidized [2Fe-2S]-[ferredoxin] + 2 S-adenosyl-L-methionine + 4 H(+) = [[Fe-S] cluster scaffold protein] + N(6)-[(R)-dihydrolipoyl]-L-lysyl-[protein] + 4 Fe(3+) + 2 hydrogen sulfide + 2 5'-deoxyadenosine + 2 L-methionine + 2 reduced [2Fe-2S]-[ferredoxin]. It functions in the pathway protein modification; protein lipoylation via endogenous pathway; protein N(6)-(lipoyl)lysine from octanoyl-[acyl-carrier-protein]: step 2/2. Functionally, catalyzes the radical-mediated insertion of two sulfur atoms into the C-6 and C-8 positions of the octanoyl moiety bound to the lipoyl domains of lipoate-dependent enzymes, thereby converting the octanoylated domains into lipoylated derivatives. The protein is Lipoyl synthase of Rhodospirillum rubrum (strain ATCC 11170 / ATH 1.1.1 / DSM 467 / LMG 4362 / NCIMB 8255 / S1).